The following is an 87-amino-acid chain: Small ribosomal subunit protein uS15 (87 aa).

This sequence belongs to the universal ribosomal protein uS15 family. In terms of assembly, part of the 30S ribosomal subunit. Forms a bridge to the 50S subunit in the 70S ribosome, contacting the 23S rRNA.

In terms of biological role, one of the primary rRNA binding proteins, it binds directly to 16S rRNA where it helps nucleate assembly of the platform of the 30S subunit by binding and bridging several RNA helices of the 16S rRNA. Its function is as follows. Forms an intersubunit bridge (bridge B4) with the 23S rRNA of the 50S subunit in the ribosome. The protein is Small ribosomal subunit protein uS15 of Clostridium botulinum (strain Eklund 17B / Type B).